The primary structure comprises 173 residues: Ribulose bisphosphate carboxylase small subunit, chloroplastic 5 (173 aa).

Residues 1-49 (MASIPATVATVAQANMVAPFTGLKSNAAFPVTKKVNDFSTLPSNGGRVQ) constitute a chloroplast transit peptide.

It belongs to the RuBisCO small chain family. As to quaternary structure, heterohexadecamer of 8 large and 8 small subunits.

Its subcellular location is the plastid. It is found in the chloroplast. In terms of biological role, ruBisCO catalyzes two reactions: the carboxylation of D-ribulose 1,5-bisphosphate, the primary event in carbon dioxide fixation, as well as the oxidative fragmentation of the pentose substrate. Both reactions occur simultaneously and in competition at the same active site. Although the small subunit is not catalytic it is essential for maximal activity. This is Ribulose bisphosphate carboxylase small subunit, chloroplastic 5 from Flaveria pringlei.